The sequence spans 243 residues: MRCISCREEYLPRNAGTCKECYVEAGETEEELKREIDDLKAKVAFLRLSSSLDHGTSSTSRSFTDVVLIASEDNAGSPPIPAHKSVLVSRSPVFKAMLENEMEESLSGTIKISDVSYDALRTFVYYLYTAEACLDEQMACDLLVMSEKYQVKHLKSYCERFLVTKLSPDNSLMTYAFAHQHNAKHVLDAALSQIVENMDKLTKREEYMELVEKDPRLIVEIYEAYLSKQVNTAAGGTSTSKTS.

The stretch at 19–51 (KECYVEAGETEEELKREIDDLKAKVAFLRLSSS) forms a coiled coil. Residues 64 to 136 (TDVVLIASED…LYTAEACLDE (73 aa)) form the BTB domain.

In terms of assembly, interacts with CUL3A and CUL3B.

It participates in protein modification; protein ubiquitination. Functionally, may act as a substrate-specific adapter of an E3 ubiquitin-protein ligase complex (CUL3-RBX1-BTB) which mediates the ubiquitination and subsequent proteasomal degradation of target proteins. The polypeptide is BTB/POZ domain-containing protein At4g08455 (Arabidopsis thaliana (Mouse-ear cress)).